A 671-amino-acid chain; its full sequence is DNA ligase (671 aa).

NAD(+) contacts are provided by residues 32–36 (DAEYD), 81–82 (SL), and E113. The active-site N6-AMP-lysine intermediate is K115. The NAD(+) site is built by R136, E173, K290, and K314. Zn(2+)-binding residues include C408, C411, C426, and C432. In terms of domain architecture, BRCT spans 593–671 (EIDSPFAGKT…EAEMIRLLGA (79 aa)).

It belongs to the NAD-dependent DNA ligase family. LigA subfamily. It depends on Mg(2+) as a cofactor. Requires Mn(2+) as cofactor.

It carries out the reaction NAD(+) + (deoxyribonucleotide)n-3'-hydroxyl + 5'-phospho-(deoxyribonucleotide)m = (deoxyribonucleotide)n+m + AMP + beta-nicotinamide D-nucleotide.. DNA ligase that catalyzes the formation of phosphodiester linkages between 5'-phosphoryl and 3'-hydroxyl groups in double-stranded DNA using NAD as a coenzyme and as the energy source for the reaction. It is essential for DNA replication and repair of damaged DNA. The chain is DNA ligase from Salmonella dublin (strain CT_02021853).